We begin with the raw amino-acid sequence, 131 residues long: Small ribosomal subunit protein uS8 (131 aa).

It belongs to the universal ribosomal protein uS8 family. As to quaternary structure, part of the 30S ribosomal subunit. Contacts proteins S5 and S12.

Functionally, one of the primary rRNA binding proteins, it binds directly to 16S rRNA central domain where it helps coordinate assembly of the platform of the 30S subunit. The protein is Small ribosomal subunit protein uS8 of Dechloromonas aromatica (strain RCB).